The primary structure comprises 128 residues: Glycine cleavage system H protein (128 aa).

One can recognise a Lipoyl-binding domain in the interval 24–106; it reads LVRIGISEFA…HGEGWLLIIR (83 aa). Lysine 65 carries the N6-lipoyllysine modification.

The protein belongs to the GcvH family. The glycine cleavage system is composed of four proteins: P, T, L and H. The cofactor is (R)-lipoate.

Functionally, the glycine cleavage system catalyzes the degradation of glycine. The H protein shuttles the methylamine group of glycine from the P protein to the T protein. The polypeptide is Glycine cleavage system H protein (Prochlorococcus marinus (strain NATL2A)).